We begin with the raw amino-acid sequence, 689 residues long: Glycine--tRNA ligase beta subunit (689 aa).

It belongs to the class-II aminoacyl-tRNA synthetase family. As to quaternary structure, tetramer of two alpha and two beta subunits.

It is found in the cytoplasm. It catalyses the reaction tRNA(Gly) + glycine + ATP = glycyl-tRNA(Gly) + AMP + diphosphate. The protein is Glycine--tRNA ligase beta subunit of Yersinia enterocolitica serotype O:8 / biotype 1B (strain NCTC 13174 / 8081).